The chain runs to 380 residues: Probable protein phosphatase 2C 2 (380 aa).

The 271-residue stretch at Arg69–Phe339 folds into the PPM-type phosphatase domain. The Mn(2+) site is built by Asp113, Gly114, Asp287, and Asp330.

Belongs to the PP2C family. It depends on Mg(2+) as a cofactor. Mn(2+) serves as cofactor.

The catalysed reaction is O-phospho-L-seryl-[protein] + H2O = L-seryl-[protein] + phosphate. It carries out the reaction O-phospho-L-threonyl-[protein] + H2O = L-threonyl-[protein] + phosphate. The sequence is that of Probable protein phosphatase 2C 2 from Oryza sativa subsp. japonica (Rice).